The chain runs to 325 residues: Probable cell division protein WhiA (325 aa).

Residues 273 to 306 (SLEELGRLADPPMTKDAVAGRIRRLLSMADRKAK) constitute a DNA-binding region (H-T-H motif).

This sequence belongs to the WhiA family.

Its function is as follows. Involved in cell division and chromosome segregation. This Mycobacterium bovis (strain BCG / Tokyo 172 / ATCC 35737 / TMC 1019) protein is Probable cell division protein WhiA.